The following is a 146-amino-acid chain: uncharacterized protein (146 aa).

The Glutaredoxin domain maps to 34–135; the sequence is EDKIVNDVMT…PLLEKAHALF (102 aa). [2Fe-2S] cluster is bound at residue C54.

Belongs to the glutaredoxin family. Monothiol subfamily.

This is an uncharacterized protein from Caenorhabditis elegans.